The primary structure comprises 236 residues: CDP-diacylglycerol--glycerol-3-phosphate 3-phosphatidyltransferase (236 aa).

The next 5 membrane-spanning stretches (helical) occupy residues 39–59, 66–86, 120–140, 163–183, and 196–216; these read IFIALPTIIFIALDNQLGVLA, ISISLQISLLIGGFLFLTAVI, VLIALAINGYFHFSLLIVFIV, WLGKWKTIMQMVGIVFSCFVW, and GLFFWLLTQLPYYLAAVFSIW.

The protein belongs to the CDP-alcohol phosphatidyltransferase class-I family.

It is found in the cell membrane. The catalysed reaction is a CDP-1,2-diacyl-sn-glycerol + sn-glycerol 3-phosphate = a 1,2-diacyl-sn-glycero-3-phospho-(1'-sn-glycero-3'-phosphate) + CMP + H(+). Its pathway is phospholipid metabolism; phosphatidylglycerol biosynthesis; phosphatidylglycerol from CDP-diacylglycerol: step 1/2. In terms of biological role, this protein catalyzes the committed step to the synthesis of the acidic phospholipids. This chain is CDP-diacylglycerol--glycerol-3-phosphate 3-phosphatidyltransferase (pgsA), found in Mycoplasma genitalium (strain ATCC 33530 / DSM 19775 / NCTC 10195 / G37) (Mycoplasmoides genitalium).